A 146-amino-acid polypeptide reads, in one-letter code: Hemoglobin subunit beta (146 aa).

The residue at position 1 (Val1) is an N-acetylvaline. The Globin domain maps to 2 to 146; that stretch reads HLTGEEKSAV…VANALAHKYH (145 aa). Position 12 is a phosphothreonine (Thr12). Position 44 is a phosphoserine (Ser44). Lys59 bears the N6-acetyllysine mark. His63 provides a ligand contact to heme b. Residue Lys82 is modified to N6-acetyllysine. His92 serves as a coordination point for heme b. An S-nitrosocysteine modification is found at Cys93. N6-acetyllysine is present on Lys144.

The protein belongs to the globin family. Heterotetramer of two alpha chains and two beta chains. In terms of tissue distribution, red blood cells.

Functionally, involved in oxygen transport from the lung to the various peripheral tissues. The chain is Hemoglobin subunit beta (HBB) from Saguinus oedipus (Cotton-top tamarin).